The following is a 653-amino-acid chain: Acetyl-coenzyme A synthetase (653 aa).

Residues 196–199 (RGGK) and Thr-315 contribute to the CoA site. ATP-binding positions include 391–393 (GEP), 415–420 (DTWWQT), Asp-506, and Arg-521. Ser-529 is a binding site for CoA. Position 532 (Arg-532) interacts with ATP. Val-543 and Val-548 together coordinate Mg(2+). Lys-618 is modified (N6-acetyllysine).

The protein belongs to the ATP-dependent AMP-binding enzyme family. Mg(2+) serves as cofactor. Acetylated. Deacetylation by the SIR2-homolog deacetylase activates the enzyme.

The enzyme catalyses acetate + ATP + CoA = acetyl-CoA + AMP + diphosphate. In terms of biological role, catalyzes the conversion of acetate into acetyl-CoA (AcCoA), an essential intermediate at the junction of anabolic and catabolic pathways. AcsA undergoes a two-step reaction. In the first half reaction, AcsA combines acetate with ATP to form acetyl-adenylate (AcAMP) intermediate. In the second half reaction, it can then transfer the acetyl group from AcAMP to the sulfhydryl group of CoA, forming the product AcCoA. This is Acetyl-coenzyme A synthetase from Laribacter hongkongensis (strain HLHK9).